We begin with the raw amino-acid sequence, 1487 residues long: Collagen alpha-1(II) chain (1487 aa).

The N-terminal stretch at 1-25 is a signal peptide; it reads MIRLGAPQTLVLLTLLVAAVLRCHG. The propeptide at 26–181 is N-terminal propeptide; it reads QDVQKAGSCV…PPGLGGNFAA (156 aa). The 59-residue stretch at 32 to 90 folds into the VWFC domain; sequence GSCVQDGQRYNDKDVWKPEPCRICVCDTGTVLCDDIICEDMKDCLSPETPFGECCPICS. The segment at 96-1234 is disordered; the sequence is ASGQPGPKGQ…GLGQREKGPD (1139 aa). 2 stretches are compositionally biased toward basic and acidic residues: residues 105–116 and 133–154; these read QKGEPGDIKDIV and PRGDRGDKGEKGAPGPRGRDGE. Positions 158–173 are enriched in pro residues; it reads PGNPGPPGPPGPPGPP. K190 carries the post-translational modification 5-hydroxylysine. K190 is a glycosylation site (O-linked (Gal...) hydroxylysine). Low complexity predominate over residues 192–203; that stretch reads GGAQMGVMQGPM. The tract at residues 201–1214 is triple-helical region; the sequence is GPMGPMGPRG…PGPPGPPGPP (1014 aa). The segment covering 208–217 has biased composition (pro residues); that stretch reads PRGPPGPAGA. 12 positions are modified to hydroxyproline: P212, P218, P230, P233, P245, P248, P251, P260, P269, P278, P281, and P284. The segment covering 218 to 239 has biased composition (low complexity); it reads PGPQGFQGNPGEPGEPGVSGPM. Residues 241–250 show a composition bias toward pro residues; the sequence is PRGPPGPPGK. Residues 251–265 show a composition bias toward basic and acidic residues; it reads PGDDGEAGKPGKSGE. Residue K287 is modified to 5-hydroxylysine. K287 carries an O-linked (Gal...) hydroxylysine glycan. Hydroxyproline is present on P293. K299 carries the post-translational modification 5-hydroxylysine. The O-linked (Gal...) hydroxylysine glycan is linked to K299. P305 carries the hydroxyproline modification. K308 carries the 5-hydroxylysine modification. O-linked (Gal...) hydroxylysine glycosylation occurs at K308. Low complexity predominate over residues 310 to 320; that stretch reads ESGSPGENGSP. Hydroxyproline is present on residues P314, P320, P329, P350, P356, P365, P368, and P371. The segment covering 335-350 has biased composition (low complexity); it reads TGPAGAAGARGNDGQP. The segment covering 360–369 has biased composition (gly residues); the sequence is GPAGGPGFPG. Composition is skewed to low complexity over residues 370–382 and 391–431; these read APGAKGEAGPTGA and PRGE…AGAP. Residue K374 is modified to 5-hydroxylysine. The O-linked (Gal...) hydroxylysine glycan is linked to K374. 5 positions are modified to hydroxyproline: P395, P398, P401, P410, and P416. At K419 the chain carries 5-hydroxylysine. Hydroxyproline occurs at positions 425, 431, 434, and 440. Positions 433–442 are enriched in pro residues; the sequence is FPGPRGPPGP. K452 bears the 5-hydroxylysine mark. P458 is subject to Hydroxyproline. 5-hydroxylysine is present on residues K464 and K470. Hydroxyproline is present on residues P473, P482, P497, P506, P512, and P518. A 5-hydroxylysine modification is found at K527. P530 is modified (hydroxyproline). K542 carries the 5-hydroxylysine modification. A hydroxyproline mark is found at P551, P557, P566, P581, P587, P590, P599, and P605. The residue at position 608 (K608) is a 5-hydroxylysine. K608 is a glycosylation site (O-linked (Gal...) hydroxylysine). Position 614 is a hydroxyproline (P614). 5-hydroxylysine is present on K620. An O-linked (Gal...) hydroxylysine glycan is attached at K620. Residues 622–631 are compositionally biased toward low complexity; it reads LPGAPGLRGL. 6 positions are modified to hydroxyproline: P623, P626, P632, P644, P659, and P668. Positions 656 to 667 are enriched in low complexity; sequence QGAPGPSGFQGL. P670 is subject to 3-hydroxyproline. A hydroxyproline mark is found at P671 and P674. The span at 721–736 shows a compositional bias: low complexity; the sequence is LPGTPGTDGPKGAAGP. Over residues 764 to 775 the composition is skewed to basic and acidic residues; sequence KGDRGDVGEKGP. Composition is skewed to low complexity over residues 833 to 848 and 877 to 913; these read AGFAGPPGADGQPGAK and PTGVTGPKGARGAQGPPGATGFPGAAGRVGPPGSNGN. P907 is modified (3-hydroxyproline). P908, P914, and P920 each carry 4-hydroxyproline. Pro residues predominate over residues 1069 to 1079; it reads APGPPGSPGPA. Low complexity predominate over residues 1091–1109; it reads AGAQGPMGPAGPAGARGMP. The segment covering 1115 to 1129 has biased composition (basic and acidic residues); it reads RGDKGETGEAGERGL. 5-hydroxylysine is present on K1130. K1130 carries an O-linked (Gal...) hydroxylysine glycan. P1144 is subject to 3-hydroxyproline. Positions 1148–1157 are enriched in low complexity; it reads SGDQGASGPA. The residue at position 1181 (P1181) is a 4-hydroxyproline. At P1186 the chain carries 3-hydroxyproline. 4-hydroxyproline is present on P1187. Positions 1199–1216 are enriched in pro residues; the sequence is AGPPGNPGPPGPPGPPGP. The residue at position 1201 (P1201) is a 3-hydroxyproline. Residues P1202 and P1205 each carry the 4-hydroxyproline modification. The residue at position 1207 (P1207) is a 3-hydroxyproline. P1208 and P1211 each carry 4-hydroxyproline. Position 1213 is a 3-hydroxyproline (P1213). P1214 carries the post-translational modification 4-hydroxyproline. The nonhelical region (C-terminal) stretch occupies residues 1215 to 1241; that stretch reads GPGIDMSAFAGLGQREKGPDPLQYMRA. Residues 1253–1487 enclose the Fibrillar collagen NC1 domain; the sequence is AEVDATLKSL…GVDIGPVCFL (235 aa). Intrachain disulfides connect C1283–C1315, C1323–C1485, and C1393–C1438. Positions 1301, 1303, 1304, 1306, and 1309 each coordinate Ca(2+). N1388 carries N-linked (GlcNAc...) asparagine glycosylation.

It belongs to the fibrillar collagen family. As to quaternary structure, homotrimers of alpha 1(II) chains. In terms of processing, probably 3-hydroxylated on prolines by LEPREL1. Proline residues at the third position of the tripeptide repeating unit (G-X-P) are hydroxylated in some or all of the chains. Proline residues at the second position of the tripeptide repeating unit (G-P-X) are hydroxylated in some of the chains. O-linked glycans consist of Glc-Gal disaccharides bound to the oxygen atom of post-translationally added hydroxyl groups. Post-translationally, contains mostly 4-hydroxyproline. Prolines at the third position of the tripeptide repeating unit (G-X-P) are 4-hydroxylated in some or all of the chains. In terms of processing, contains 3-hydroxyproline at a few sites. This modification occurs on the first proline residue in the sequence motif Gly-Pro-Hyp, where Hyp is 4-hydroxyproline. Lysine residues at the third position of the tripeptide repeating unit (G-X-Y) are 5-hydroxylated in some or all of the chains. Post-translationally, O-glycosylated on hydroxylated lysine residues. The O-linked glycan consists of a Glc-Gal disaccharide.

It localises to the secreted. It is found in the extracellular space. Its subcellular location is the extracellular matrix. Functionally, type II collagen is specific for cartilaginous tissues. It is essential for the normal embryonic development of the skeleton, for linear growth and for the ability of cartilage to resist compressive forces. This chain is Collagen alpha-1(II) chain, found in Bos taurus (Bovine).